The primary structure comprises 427 residues: Trigger factor (427 aa).

One can recognise a PPIase FKBP-type domain in the interval 163 to 248 (GDTVVIDFVG…IHEVKTKEVP (86 aa)).

This sequence belongs to the FKBP-type PPIase family. Tig subfamily.

It is found in the cytoplasm. It carries out the reaction [protein]-peptidylproline (omega=180) = [protein]-peptidylproline (omega=0). In terms of biological role, involved in protein export. Acts as a chaperone by maintaining the newly synthesized protein in an open conformation. Functions as a peptidyl-prolyl cis-trans isomerase. In Streptococcus agalactiae serotype III (strain NEM316), this protein is Trigger factor.